We begin with the raw amino-acid sequence, 283 residues long: MGEILDGKKLARELGEKLGSEVDSLKEHGVSPKLCVINIGDDPASKVYVASKKRKAEKLGIKQVVYQLPADESEEDVLKLIDSLNADPEVSSLMVQLPVPPQINADRVIERIDPEKDVDCLTPANIGRLWQGKHFVEPATAAGIIALLDHYQIDLTGKNAVIVGRSNIVGKPLAALMLERNASVSILHSRSRNLADLTKQADILVCAVGKAEMIKADMVKEGAVVIDVGINRVDGHLVGDVDFAPVKEKASWITPVPGGVGPLTVEFLMEEVIKLTRRQHGLD.

Residues 164–166, serine 189, and isoleucine 230 contribute to the NADP(+) site; that span reads GRS.

It belongs to the tetrahydrofolate dehydrogenase/cyclohydrolase family. In terms of assembly, homodimer.

The catalysed reaction is (6R)-5,10-methylene-5,6,7,8-tetrahydrofolate + NADP(+) = (6R)-5,10-methenyltetrahydrofolate + NADPH. The enzyme catalyses (6R)-5,10-methenyltetrahydrofolate + H2O = (6R)-10-formyltetrahydrofolate + H(+). Its pathway is one-carbon metabolism; tetrahydrofolate interconversion. In terms of biological role, catalyzes the oxidation of 5,10-methylenetetrahydrofolate to 5,10-methenyltetrahydrofolate and then the hydrolysis of 5,10-methenyltetrahydrofolate to 10-formyltetrahydrofolate. This is Bifunctional protein FolD from Lactobacillus delbrueckii subsp. bulgaricus (strain ATCC BAA-365 / Lb-18).